We begin with the raw amino-acid sequence, 1115 residues long: Tbc2 translation factor, chloroplastic (1115 aa).

Low complexity-rich tracts occupy residues 69–87 and 163–175; these read TASV…QLSS and RRAG…SGRA. Disordered stretches follow at residues 69–90 and 163–210; these read TASV…SKAL and RRAG…SSSS. Positions 176-186 are enriched in gly residues; that stretch reads RGWGSGPGRNG. Residues 187–210 are compositionally biased toward low complexity; sequence SGSSSVSVNGSGSSSNGSSSSSSS. 9 consecutive repeat copies span residues 483–521, 607–645, 685–723, 724–763, 764–803, 804–842, 843–880, 990–1029, and 1030–1068. Positions 483–1068 are 9 X 38 AA approximate repeats; sequence LVLELSRARL…LRPPPEWLQA (586 aa).

Part of a 400 kDa complex which is not stably associated with RNA.

The protein resides in the plastid. The protein localises to the chloroplast stroma. In terms of biological role, required for expression of the chloroplast encoded psbC mRNA, most likely for translation initiation. Interacts with the 5'-UTR of psbC. This Chlamydomonas reinhardtii (Chlamydomonas smithii) protein is Tbc2 translation factor, chloroplastic (TBC2).